The primary structure comprises 338 residues: tRNA dimethylallyltransferase (338 aa).

Position 13 to 20 (13 to 20 (GPTASGKT)) interacts with ATP. 15-20 (TASGKT) is a binding site for substrate. Interaction with substrate tRNA stretches follow at residues 38–41 (DSTL) and 162–166 (QRVSR).

It belongs to the IPP transferase family. As to quaternary structure, monomer. Mg(2+) is required as a cofactor.

The enzyme catalyses adenosine(37) in tRNA + dimethylallyl diphosphate = N(6)-dimethylallyladenosine(37) in tRNA + diphosphate. Its function is as follows. Catalyzes the transfer of a dimethylallyl group onto the adenine at position 37 in tRNAs that read codons beginning with uridine, leading to the formation of N6-(dimethylallyl)adenosine (i(6)A). The sequence is that of tRNA dimethylallyltransferase from Cellvibrio japonicus (strain Ueda107) (Pseudomonas fluorescens subsp. cellulosa).